Reading from the N-terminus, the 118-residue chain is uncharacterized protein (118 aa).

The segment at 1 to 118 is disordered; it reads MASARGAKQS…AARQNEKTAR (118 aa). Residues 13–28 show a composition bias toward low complexity; it reads RVGTTRYTETSTVRVE. The span at 29 to 49 shows a compositional bias: basic and acidic residues; the sequence is TSSHRVETSSRRVETSQRRSE.

This is an uncharacterized protein from Homo sapiens (Human).